A 299-amino-acid polypeptide reads, in one-letter code: Protoheme IX farnesyltransferase 1 (299 aa).

Transmembrane regions (helical) follow at residues 25–45 (VVVLMLITSLVGMFLATRAGV), 47–67 (WSVLLFGNLGIGLCAGGAAVV), 95–115 (LPALAFALLLAVMGLALLLAF), 119–139 (LTAWLTLASLLGYAVLYTGFL), 147–167 (IVIGGLAGAAPPLLGWVAVSG), 173–193 (PLLLVLIIFAWTPPHFWALAI), 217–237 (ALHILLYTLILLAVSLLPYAI), 243–263 (LYLACALALGLRFLHWAWVLY), and 279–299 (IGYLFALFIALLVDHYLLLNL).

The protein belongs to the UbiA prenyltransferase family. Protoheme IX farnesyltransferase subfamily.

The protein localises to the cell inner membrane. It carries out the reaction heme b + (2E,6E)-farnesyl diphosphate + H2O = Fe(II)-heme o + diphosphate. The protein operates within porphyrin-containing compound metabolism; heme O biosynthesis; heme O from protoheme: step 1/1. Functionally, converts heme B (protoheme IX) to heme O by substitution of the vinyl group on carbon 2 of heme B porphyrin ring with a hydroxyethyl farnesyl side group. This Pseudomonas entomophila (strain L48) protein is Protoheme IX farnesyltransferase 1.